The following is a 62-amino-acid chain: uncharacterized protein (62 aa).

2 consecutive 4Fe-4S ferredoxin-type domains span residues 2–31 (AVTIDYSLCKGAECAECVNNCPMEVFEIEG) and 32–62 (DKVVVARPDDCTYCGVCEDVCPTGAVKVEPE). [4Fe-4S] cluster-binding residues include C10, C15, C18, C22, C42, C45, C48, and C52.

Requires [4Fe-4S] cluster as cofactor.

This is an uncharacterized protein from Methanocaldococcus jannaschii (strain ATCC 43067 / DSM 2661 / JAL-1 / JCM 10045 / NBRC 100440) (Methanococcus jannaschii).